We begin with the raw amino-acid sequence, 107 residues long: Potassium voltage-gated channel subfamily E member 3 (107 aa).

Asn5, Asn22, and Asn45 each carry an N-linked (GlcNAc...) asparagine glycan. A disordered region spans residues 31-54 (CRPGPGPGSGTGPDNQTEDHRASL). Residues 61-81 (SYMYILFVMFLFAVTVGSLIL) traverse the membrane as a helical segment. The interval 72–83 (FAVTVGSLILGY) is interaction with KCNQ1. At 82 to 103 (GYTRSRKVDKRSDPYHVYIKNR) the chain is on the cytoplasmic side.

Belongs to the potassium channel KCNE family. As to quaternary structure, interacts with KCNB1. Interacts with KCNC2. Associates with KCNC4/Kv3.4. Interacts with KCNQ1; associates with a KCNQ1:KCNE3 stoichiometry of 4:4; produces a current with nearly instantaneous activation with a linear current-voltage relationship and alters membrane raft localization; affects KCNQ1 structure and gating properties.

It is found in the cell membrane. The protein resides in the cytoplasm. The protein localises to the perikaryon. Its subcellular location is the cell projection. It localises to the dendrite. It is found in the membrane raft. Functionally, ancillary protein that functions as a regulatory subunit of the voltage-gated potassium (Kv) channel complex composed of pore-forming and potassium-conducting alpha subunits and of regulatory beta subunits. KCNE3 beta subunit modulates the gating kinetics and enhances stability of the channel complex. Alters the gating of the delayed rectifier Kv channel containing KCNB1 alpha subunit. Associates with KCNC4/Kv3.4 alpha subunit to form the subthreshold Kv channel in skeletal muscle and to establish the resting membrane potential (RMP) in muscle cells. Association with KCNQ1/KCLQT1 alpha subunit may form the intestinal cAMP-stimulated potassium channel involved in chloride secretion that produces a current with nearly instantaneous activation with a linear current-voltage relationship. The chain is Potassium voltage-gated channel subfamily E member 3 from Rattus norvegicus (Rat).